Consider the following 146-residue polypeptide: Mitochondrial import receptor subunit TOM20 homolog B (146 aa).

At 1 to 5 (MMGGS) the chain is on the mitochondrial intermembrane side. A helical membrane pass occupies residues 6–25 (SSRIAAGLGAALFVGYCIYF). Over 26–146 (DRKRRSDPNY…AQSISDDDIE (121 aa)) the chain is Cytoplasmic. Over residues 37 to 47 (NKLRERRKKQK) the composition is skewed to basic residues. A disordered region spans residues 37 to 56 (NKLRERRKKQKAAQEKAGLS). S141 bears the Phosphoserine mark.

The protein belongs to the Tom20 family. In terms of assembly, forms part of the preprotein translocase complex of the outer mitochondrial membrane (TOM complex). Interacts with tom22.

The protein localises to the mitochondrion outer membrane. Its function is as follows. Central component of the receptor complex responsible for the recognition and translocation of cytosolically synthesized mitochondrial preproteins. Together with tom22 functions as the transit peptide receptor at the surface of the mitochondrion outer membrane and facilitates the movement of preproteins into the tom40 translocation pore. The protein is Mitochondrial import receptor subunit TOM20 homolog B (tomm20b) of Danio rerio (Zebrafish).